Reading from the N-terminus, the 142-residue chain is MAGLNIYVRRWRTALHATVSALIVAILGLAITPVASAATARATLSVTSTWQTGFIARFTITNSSTAPLTDWKLEFDLPAGESVLHTWNSTVARSGTHYVLSPANWNRIIAPGGSATGGLRGGLTGSYSPPSSCLLNGQYPCT.

An N-terminal signal peptide occupies residues 1-37; it reads MAGLNIYVRRWRTALHATVSALIVAILGLAITPVASA. Positions 38 to 142 constitute a CBM2 domain; that stretch reads ATARATLSVT…CLLNGQYPCT (105 aa).

The protein localises to the secreted. Its subcellular location is the cell wall. It localises to the cell membrane. Functionally, carbohydrate binding protein that binds chitin and cellulose. Lacks enzymatic activity and does not hydrolyze chitin and cellulose. May interact with mycobacterial biofilms, which are rich in cellulose, and play a role in biofilm formation. Could also act as an adhesin, improving the initial attachment to host cells and aiding M.bovis during the initial stages of infection. In terms of biological role, may act as a virulence factor that modulates host immune responses and contributes to host immune evasion. This is Cellulose/chitin binding protein BQ2027_MB2009 from Mycobacterium bovis (strain ATCC BAA-935 / AF2122/97).